A 490-amino-acid chain; its full sequence is Glutamyl-tRNA(Gln) amidotransferase subunit A (490 aa).

Catalysis depends on charge relay system residues Lys-78 and Ser-153. Ser-177 functions as the Acyl-ester intermediate in the catalytic mechanism.

This sequence belongs to the amidase family. GatA subfamily. As to quaternary structure, heterotrimer of A, B and C subunits.

The catalysed reaction is L-glutamyl-tRNA(Gln) + L-glutamine + ATP + H2O = L-glutaminyl-tRNA(Gln) + L-glutamate + ADP + phosphate + H(+). Its function is as follows. Allows the formation of correctly charged Gln-tRNA(Gln) through the transamidation of misacylated Glu-tRNA(Gln) in organisms which lack glutaminyl-tRNA synthetase. The reaction takes place in the presence of glutamine and ATP through an activated gamma-phospho-Glu-tRNA(Gln). This Bdellovibrio bacteriovorus (strain ATCC 15356 / DSM 50701 / NCIMB 9529 / HD100) protein is Glutamyl-tRNA(Gln) amidotransferase subunit A.